Reading from the N-terminus, the 219-residue chain is Adenylate kinase (219 aa).

10–15 contributes to the ATP binding site; sequence GAGKGT. The segment at 30–59 is NMP; that stretch reads STGDMLRAAVKAGTPLGQQAKKIMDEGGLV. AMP-binding positions include threonine 31, arginine 36, 57 to 59, 85 to 88, and glutamine 92; these read GLV and GFPR. The tract at residues 122–159 is LID; that stretch reads GRRVHPGSGRVYHVTHNPPRQEGKDDVTGEDLVQREDD. ATP is bound by residues arginine 123 and 132–133; that span reads VY. Residues 128–150 form a disordered region; that stretch reads GSGRVYHVTHNPPRQEGKDDVTG. The segment covering 140–150 has biased composition (basic and acidic residues); it reads PRQEGKDDVTG. Residues arginine 156 and arginine 167 each contribute to the AMP site. Residue arginine 203 coordinates ATP.

Belongs to the adenylate kinase family. Monomer.

It localises to the cytoplasm. The catalysed reaction is AMP + ATP = 2 ADP. Its pathway is purine metabolism; AMP biosynthesis via salvage pathway; AMP from ADP: step 1/1. Functionally, catalyzes the reversible transfer of the terminal phosphate group between ATP and AMP. Plays an important role in cellular energy homeostasis and in adenine nucleotide metabolism. This is Adenylate kinase from Halorhodospira halophila (strain DSM 244 / SL1) (Ectothiorhodospira halophila (strain DSM 244 / SL1)).